Consider the following 428-residue polypeptide: Glutamyl-tRNA reductase (428 aa).

Substrate is bound by residues 49–52 (TCNR), serine 107, 112–114 (EPQ), and glutamine 118. Cysteine 50 (nucleophile) is an active-site residue. 187–192 (GAGETI) provides a ligand contact to NADP(+).

This sequence belongs to the glutamyl-tRNA reductase family. Homodimer.

The catalysed reaction is (S)-4-amino-5-oxopentanoate + tRNA(Glu) + NADP(+) = L-glutamyl-tRNA(Glu) + NADPH + H(+). It participates in porphyrin-containing compound metabolism; protoporphyrin-IX biosynthesis; 5-aminolevulinate from L-glutamyl-tRNA(Glu): step 1/2. Functionally, catalyzes the NADPH-dependent reduction of glutamyl-tRNA(Glu) to glutamate 1-semialdehyde (GSA). This chain is Glutamyl-tRNA reductase, found in Pseudomonas fluorescens (strain Pf0-1).